Reading from the N-terminus, the 277-residue chain is Diaminopimelate epimerase (277 aa).

Substrate contacts are provided by Asn-11 and Asn-62. Catalysis depends on Cys-71, which acts as the Proton donor. Residues 72–73 (GN), Asn-160, Asn-193, and 211–212 (ER) contribute to the substrate site. Catalysis depends on Cys-220, which acts as the Proton acceptor. 221 to 222 (GT) is a substrate binding site.

This sequence belongs to the diaminopimelate epimerase family. As to quaternary structure, homodimer.

It is found in the cytoplasm. The catalysed reaction is (2S,6S)-2,6-diaminopimelate = meso-2,6-diaminopimelate. It participates in amino-acid biosynthesis; L-lysine biosynthesis via DAP pathway; DL-2,6-diaminopimelate from LL-2,6-diaminopimelate: step 1/1. Functionally, catalyzes the stereoinversion of LL-2,6-diaminopimelate (L,L-DAP) to meso-diaminopimelate (meso-DAP), a precursor of L-lysine. The chain is Diaminopimelate epimerase from Methanococcus maripaludis (strain C6 / ATCC BAA-1332).